A 59-amino-acid chain; its full sequence is Large ribosomal subunit protein bL32 (59 aa).

Belongs to the bacterial ribosomal protein bL32 family.

The polypeptide is Large ribosomal subunit protein bL32 (Malacoplasma penetrans (strain HF-2) (Mycoplasma penetrans)).